The primary structure comprises 274 residues: TATA box-binding protein-associated factor RNA polymerase I subunit D (274 aa).

Polar residues predominate over residues M1–Q19. 2 disordered regions span residues M1–N45 and N84–R111. S20 is modified (phosphoserine). Over residues N84–T110 the composition is skewed to basic residues. Residues S132 and S229 each carry the phosphoserine modification.

As to quaternary structure, component of the transcription factor SL1/TIF-IB complex, composed of TBP and at least TAF1A, TAF1B, TAF1C and TAF1D. Interacts with UBTF.

The protein resides in the nucleus. In terms of biological role, component of the transcription factor SL1/TIF-IB complex, which is involved in the assembly of the PIC (preinitiation complex) during RNA polymerase I-dependent transcription. The rate of PIC formation probably is primarily dependent on the rate of association of SL1/TIF-IB with the rDNA promoter. SL1/TIF-IB is involved in stabilization of nucleolar transcription factor 1/UBTF on rDNA. Formation of SL1/TIF-IB excludes the association of TBP with TFIID subunits. The polypeptide is TATA box-binding protein-associated factor RNA polymerase I subunit D (TAF1D) (Bos taurus (Bovine)).